The primary structure comprises 246 residues: Polyhedrin (246 aa).

It belongs to the polyhedrin family.

Its function is as follows. Major component of the virus occlusion bodies, which are large proteinaceous structures (polyhedra), that protect the virus from the outside environment for extended periods until they are ingested by insect larvae. The polypeptide is Polyhedrin (PH) (Lepidoptera (butterflies and moths)).